Here is a 257-residue protein sequence, read N- to C-terminus: Kallikrein-1 (257 aa).

The N-terminal stretch at 1-18 (MWFLVLCLALSLGGTGRA) is a signal peptide. Residues 19-24 (PPIQSR) constitute a propeptide, activation peptide. The Peptidase S1 domain occupies 25–254 (IVGGWECSQP…YVKWIEDTIA (230 aa)). Cystine bridges form between cysteine 31–cysteine 169, cysteine 47–cysteine 63, cysteine 148–cysteine 215, cysteine 180–cysteine 194, and cysteine 205–cysteine 230. The active-site Charge relay system is histidine 62. An O-linked (GalNAc...) serine glycan is attached at serine 90. An N-linked (GlcNAc...) asparagine glycan is attached at asparagine 99. Serine 101 is a glycosylation site (O-linked (GalNAc...) serine). The N-linked (GlcNAc...) asparagine glycan is linked to asparagine 105. Aspartate 116 serves as the catalytic Charge relay system. Asparagine 160 carries N-linked (GlcNAc...) asparagine glycosylation. O-linked (GalNAc...) serine glycosylation is present at serine 162. The active-site Charge relay system is serine 209.

The protein belongs to the peptidase S1 family. Kallikrein subfamily.

It catalyses the reaction Preferential cleavage of Arg-|-Xaa bonds in small molecule substrates. Highly selective action to release kallidin (lysyl-bradykinin) from kininogen involves hydrolysis of Met-|-Xaa or Leu-|-Xaa.. Functionally, glandular kallikreins cleave Met-Lys and Arg-Ser bonds in kininogen to release Lys-bradykinin. The sequence is that of Kallikrein-1 (KLK1) from Macaca fascicularis (Crab-eating macaque).